A 156-amino-acid chain; its full sequence is Myosin regulatory light chain, striated adductor muscle (156 aa).

Residue A1 is modified to Blocked amino end (Ala). EF-hand domains follow at residues 15–50 and 84–119; these read KQIQ…LGRT and DSEE…MGDN. Ca(2+)-binding residues include D28, D30, D32, and D39.

In terms of biological role, in molluscan muscle, calcium regulation is associated with myosin rather than with actin. Muscle myosin contains two types of light chains: the catalytic light chain, essential for ATPase activity, and the regulatory light chain, a calcium-binding protein responsible for Ca(2+) dependent binding and Ca(2+) dependent Mg-ATPase activity. In Chlamys nipponensis akazara (Akazara scallop), this protein is Myosin regulatory light chain, striated adductor muscle.